A 359-amino-acid polypeptide reads, in one-letter code: Phosphoserine aminotransferase (359 aa).

Arg41 is a binding site for L-glutamate. Residues 75-76 (AS), Trp101, Thr151, Asp171, and Gln194 contribute to the pyridoxal 5'-phosphate site. Residue Lys195 is modified to N6-(pyridoxal phosphate)lysine. 236-237 (NT) contacts pyridoxal 5'-phosphate.

It belongs to the class-V pyridoxal-phosphate-dependent aminotransferase family. SerC subfamily. In terms of assembly, homodimer. The cofactor is pyridoxal 5'-phosphate.

The protein localises to the cytoplasm. It carries out the reaction O-phospho-L-serine + 2-oxoglutarate = 3-phosphooxypyruvate + L-glutamate. The enzyme catalyses 4-(phosphooxy)-L-threonine + 2-oxoglutarate = (R)-3-hydroxy-2-oxo-4-phosphooxybutanoate + L-glutamate. It participates in amino-acid biosynthesis; L-serine biosynthesis; L-serine from 3-phospho-D-glycerate: step 2/3. Its pathway is cofactor biosynthesis; pyridoxine 5'-phosphate biosynthesis; pyridoxine 5'-phosphate from D-erythrose 4-phosphate: step 3/5. In terms of biological role, catalyzes the reversible conversion of 3-phosphohydroxypyruvate to phosphoserine and of 3-hydroxy-2-oxo-4-phosphonooxybutanoate to phosphohydroxythreonine. The polypeptide is Phosphoserine aminotransferase (Thiobacillus denitrificans (strain ATCC 25259 / T1)).